The following is a 300-amino-acid chain: B1 kinase (300 aa).

Positions 16–282 constitute a Protein kinase domain; the sequence is WVVGPLIGKG…ITMVNSLTYF (267 aa). ATP is bound by residues 22–30 and Lys-45; that span reads IGKGGFGSI. Residue Asp-147 is the Proton acceptor of the active site.

The protein belongs to the protein kinase superfamily. Ser/Thr protein kinase family. Poxviruses subfamily. In terms of assembly, interacts with host JIP1; this interaction increases the amount of MAPK bound to JIP1 and subsequently increases the activity of transcription factors, such as JUN, that respond to these complexes. Interacts with protein OPG198; this interaction inhibits the repressive activity of OPG198 pseudokinase on viral replication factory formation. Requires Mg(2+) as cofactor. Autophosphorylated.

The protein localises to the virion. Its subcellular location is the host cytoplasm. The enzyme catalyses L-seryl-[protein] + ATP = O-phospho-L-seryl-[protein] + ADP + H(+). The catalysed reaction is L-threonyl-[protein] + ATP = O-phospho-L-threonyl-[protein] + ADP + H(+). Functionally, essential serine/threonine-protein kinase that plays different role in the viral life cycle. Phosphorylates the host small ribosomal protein RACK1 thereby customizing the ribosomes to a state optimal for viral mRNAs (which contain poly-A leaders) but not for host mRNAs. Facilitates viral DNA replication by inhibiting host BANF1, a cellular host defense responsive to foreign DNA. Phosphorylates host BANF1 on serine and threonine residues; this leads to BANF1 relocalization to the cytoplasm, loss of dimerization and impaired DNA binding activity. Indeed, BANF1 activity depends on its DNA-binding property which is blocked by VPK1-mediated phosphorylation. Required for viral intermediate genes expression, probably by inhibiting host BANF1. Modulates cellular responses via host JUN by two different mechanisms, either by direct phosphorylation or by modulation of upstream JIP1-MAPK complexes. Seems to participate in the accumulation/processing of late proteins and thus in virion maturation. In addition, inhibits B12 repressive activity on viral DNA replication via a phosphorylation-dependent mechanism. In Vaccinia virus (strain Ankara) (VACV), this protein is B1 kinase (OPG187).